Reading from the N-terminus, the 615-residue chain is Mitochondrial distribution and morphology protein 34 (615 aa).

The SMP-LTD domain occupies 1–195 (MAFNFNWSPL…LPAIIHRLSL (195 aa)). Disordered regions lie at residues 293-313 (SDKP…RTSS), 346-566 (ATTG…PQPD), and 596-615 (PAFW…YEPR). Over residues 301-313 (TPASTPNLHRTSS) the composition is skewed to polar residues. A compositionally biased stretch (low complexity) spans 346 to 355 (ATTGLSLGSG). Residues 356-367 (RHSKAGRKKKMR) show a composition bias toward basic residues. Composition is skewed to polar residues over residues 384 to 403 (IGST…TRTP), 435 to 446 (DATTSARASESS), and 457 to 499 (VTAQ…YSSR). The span at 517–557 (QQQQFQQQQQQQQQQQQQQQQQQQQQQQQQQQQQQQQQQQQ) shows a compositional bias: low complexity. The segment covering 596–606 (PAFWEDSHQHD) has biased composition (basic and acidic residues).

This sequence belongs to the MDM34 family. Component of the ER-mitochondria encounter structure (ERMES) or MDM complex, composed of mmm-1, mdm10, mdm12 and mdm34.

It localises to the mitochondrion outer membrane. In terms of biological role, component of the ERMES/MDM complex, which serves as a molecular tether to connect the endoplasmic reticulum (ER) and mitochondria. Components of this complex are involved in the control of mitochondrial shape and protein biogenesis, and function in nonvesicular lipid trafficking between the ER and mitochondria. Mdm34 is required for the interaction of the ER-resident membrane protein mmm-1 and the outer mitochondrial membrane-resident beta-barrel protein mdm10. In Neurospora crassa (strain ATCC 24698 / 74-OR23-1A / CBS 708.71 / DSM 1257 / FGSC 987), this protein is Mitochondrial distribution and morphology protein 34.